We begin with the raw amino-acid sequence, 112 residues long: Large ribosomal subunit protein bL17 (112 aa).

It belongs to the bacterial ribosomal protein bL17 family. In terms of assembly, part of the 50S ribosomal subunit. Contacts protein L32.

The protein is Large ribosomal subunit protein bL17 of Moorella thermoacetica (strain ATCC 39073 / JCM 9320).